We begin with the raw amino-acid sequence, 200 residues long: Holliday junction branch migration complex subunit RuvA (200 aa).

Positions 1–65 (MYEYIKGTLT…ETEHVLYGFS (65 aa)) are domain I. The domain II stretch occupies residues 66–144 (SRAEKECFRL…TLMPLYLEEP (79 aa)). Positions 145-149 (VVPSS) are flexible linker. The domain III stretch occupies residues 150–200 (TANSSFKEGIGALMNLGFSRLAADRMMTEAVKELSEEASVAELLPIALRKS).

Belongs to the RuvA family. In terms of assembly, homotetramer. Forms an RuvA(8)-RuvB(12)-Holliday junction (HJ) complex. HJ DNA is sandwiched between 2 RuvA tetramers; dsDNA enters through RuvA and exits via RuvB. An RuvB hexamer assembles on each DNA strand where it exits the tetramer. Each RuvB hexamer is contacted by two RuvA subunits (via domain III) on 2 adjacent RuvB subunits; this complex drives branch migration. In the full resolvosome a probable DNA-RuvA(4)-RuvB(12)-RuvC(2) complex forms which resolves the HJ.

It is found in the cytoplasm. Functionally, the RuvA-RuvB-RuvC complex processes Holliday junction (HJ) DNA during genetic recombination and DNA repair, while the RuvA-RuvB complex plays an important role in the rescue of blocked DNA replication forks via replication fork reversal (RFR). RuvA specifically binds to HJ cruciform DNA, conferring on it an open structure. The RuvB hexamer acts as an ATP-dependent pump, pulling dsDNA into and through the RuvAB complex. HJ branch migration allows RuvC to scan DNA until it finds its consensus sequence, where it cleaves and resolves the cruciform DNA. In Chlamydia trachomatis serovar A (strain ATCC VR-571B / DSM 19440 / HAR-13), this protein is Holliday junction branch migration complex subunit RuvA.